A 459-amino-acid polypeptide reads, in one-letter code: Flavin-containing monooxygenase FMO GS-OX1 (459 aa).

17–22 serves as a coordination point for FAD; it reads GAGAAG. 211-216 is an NADP(+) binding site; it reads GNYASG.

It belongs to the FMO family. FAD serves as cofactor. As to expression, mainly expressed in leaves. Low levels in flowers and seeds.

The enzyme catalyses a (Z)-omega-(methylsulfanyl)-N-sulfo-alkylhydroximate S-glucoside + NADPH + O2 + H(+) = a (Z)-omega-(methylsulfinyl)-alkyl-glucosinolate + NADP(+) + H2O. Catalyzes the conversion of methylthioalkyl glucosinolates into methylsulfinylalkyl glucosinolates. Able to S-oxygenate both desulfo- and intact 4-methylthiobutyl glucosinolates, but no activity with methionine, dihomomethionine or 5-methylthiopentaldoxime. This is Flavin-containing monooxygenase FMO GS-OX1 (FMOGS-OX1) from Arabidopsis thaliana (Mouse-ear cress).